We begin with the raw amino-acid sequence, 96 residues long: Co-chaperonin GroES (96 aa).

The protein belongs to the GroES chaperonin family. As to quaternary structure, heptamer of 7 subunits arranged in a ring. Interacts with the chaperonin GroEL.

It is found in the cytoplasm. Its function is as follows. Together with the chaperonin GroEL, plays an essential role in assisting protein folding. The GroEL-GroES system forms a nano-cage that allows encapsulation of the non-native substrate proteins and provides a physical environment optimized to promote and accelerate protein folding. GroES binds to the apical surface of the GroEL ring, thereby capping the opening of the GroEL channel. The sequence is that of Co-chaperonin GroES from Shewanella amazonensis (strain ATCC BAA-1098 / SB2B).